The primary structure comprises 212 residues: MQGIFITFEGPDGAGKTSVLKEVSERLAKESKRKIVTTREPGGIPIAEKIRTVILDPRNDRMDERTEALLYAAARRQHLVEKILPALEAGHLVLCDRFVDSSLAYQGAGRRIGIAPIASINAFATEGVSPDFTIYLDVDSDTGLRRIQENRTQQIDRLDSEGLEFHQRVRHEYLKLAEENPQRIKKIDARMSLELVVEATYQAIIERYPENF.

Residue 10–17 participates in ATP binding; it reads GPDGAGKT.

Belongs to the thymidylate kinase family.

It catalyses the reaction dTMP + ATP = dTDP + ADP. In terms of biological role, phosphorylation of dTMP to form dTDP in both de novo and salvage pathways of dTTP synthesis. The protein is Thymidylate kinase of Enterococcus faecalis (strain ATCC 700802 / V583).